Consider the following 211-residue polypeptide: Uracil phosphoribosyltransferase (211 aa).

30-34 (KGLVR) serves as a coordination point for GTP. 5-phospho-alpha-D-ribose 1-diphosphate-binding positions include arginine 79, arginine 104, and 133 to 141 (DPMLATGTT). Uracil contacts are provided by residues isoleucine 197 and 202–204 (GDA). Aspartate 203 contributes to the 5-phospho-alpha-D-ribose 1-diphosphate binding site.

Belongs to the UPRTase family. The cofactor is Mg(2+).

It carries out the reaction UMP + diphosphate = 5-phospho-alpha-D-ribose 1-diphosphate + uracil. Its pathway is pyrimidine metabolism; UMP biosynthesis via salvage pathway; UMP from uracil: step 1/1. Allosterically activated by GTP. Its function is as follows. Catalyzes the conversion of uracil and 5-phospho-alpha-D-ribose 1-diphosphate (PRPP) to UMP and diphosphate. This chain is Uracil phosphoribosyltransferase, found in Pyrobaculum arsenaticum (strain DSM 13514 / JCM 11321 / PZ6).